Consider the following 932-residue polypeptide: 3-hydroxy-3-methylglutaryl-coenzyme A reductase (932 aa).

The next 6 helical transmembrane spans lie at 20 to 40, 59 to 79, 92 to 112, 113 to 133, 162 to 182, and 193 to 213; these read VIVC…FTGL, LSSD…YLYL, ILGI…SAVI, HLFG…LLLI, MAIL…VISI, and VFCC…MTFF. The N-linked (GlcNAc...) asparagine glycan is linked to N279. Residues 322 to 342 traverse the membrane as a helical segment; the sequence is ILTAILATVLASHYIFFSDLA. Residues 343–467 form a linker region; it reads TYPEKRVSIM…APRPMPELLE (125 aa). The span at 357 to 367 shows a compositional bias: basic and acidic residues; the sequence is VVNPGSDHEDA. Residues 357 to 442 are disordered; sequence VVNPGSDHED…SGSEDEEEEV (86 aa). The segment covering 374-403 has biased composition (polar residues); the sequence is GTLSSSPSTSDVRVIESMTSRTQACQTDPV. The segment covering 406 to 421 has biased composition (low complexity); sequence SPRNSRSSSPVSSHSV. The tract at residues 468–932 is catalytic; that stretch reads ILNVGKGPNA…APGTCTANAS (465 aa). Catalysis depends on charge relay system residues E575, K707, and D783. N-linked (GlcNAc...) asparagine glycosylation occurs at N850. H882 (proton donor) is an active-site residue. N886 carries an N-linked (GlcNAc...) asparagine glycan. Position 888 is a phosphoserine; by AMPK (S888).

Belongs to the HMG-CoA reductase family.

The protein localises to the endoplasmic reticulum membrane. The catalysed reaction is (R)-mevalonate + 2 NADP(+) + CoA = (3S)-3-hydroxy-3-methylglutaryl-CoA + 2 NADPH + 2 H(+). It participates in metabolic intermediate biosynthesis; (R)-mevalonate biosynthesis; (R)-mevalonate from acetyl-CoA: step 3/3. Its function is as follows. This transmembrane glycoprotein is involved in the control of cholesterol biosynthesis. It is the rate-limiting enzyme of sterol biosynthesis. The polypeptide is 3-hydroxy-3-methylglutaryl-coenzyme A reductase (HMGCR) (Strongylocentrotus purpuratus (Purple sea urchin)).